Here is a 261-residue protein sequence, read N- to C-terminus: Ribosomal RNA small subunit methyltransferase J (261 aa).

S-adenosyl-L-methionine-binding positions include arginine 109 to aspartate 110, glutamate 125 to arginine 126, and aspartate 179.

Belongs to the methyltransferase superfamily. RsmJ family.

It is found in the cytoplasm. It carries out the reaction guanosine(1516) in 16S rRNA + S-adenosyl-L-methionine = N(2)-methylguanosine(1516) in 16S rRNA + S-adenosyl-L-homocysteine + H(+). In terms of biological role, specifically methylates the guanosine in position 1516 of 16S rRNA. This chain is Ribosomal RNA small subunit methyltransferase J, found in Pseudomonas aeruginosa (strain ATCC 15692 / DSM 22644 / CIP 104116 / JCM 14847 / LMG 12228 / 1C / PRS 101 / PAO1).